The primary structure comprises 689 residues: DNA ligase (689 aa).

NAD(+)-binding positions include 40–44 (DAEYD), 89–90 (SL), and Glu121. Lys123 serves as the catalytic N6-AMP-lysine intermediate. Residues Arg144, Glu179, Lys295, and Lys319 each coordinate NAD(+). Cys413, Cys416, Cys431, and Cys437 together coordinate Zn(2+). One can recognise a BRCT domain in the interval 610 to 689 (REQSSLTGKI…AEWLTLVRDI (80 aa)).

The protein belongs to the NAD-dependent DNA ligase family. LigA subfamily. The cofactor is Mg(2+). Requires Mn(2+) as cofactor.

It catalyses the reaction NAD(+) + (deoxyribonucleotide)n-3'-hydroxyl + 5'-phospho-(deoxyribonucleotide)m = (deoxyribonucleotide)n+m + AMP + beta-nicotinamide D-nucleotide.. In terms of biological role, DNA ligase that catalyzes the formation of phosphodiester linkages between 5'-phosphoryl and 3'-hydroxyl groups in double-stranded DNA using NAD as a coenzyme and as the energy source for the reaction. It is essential for DNA replication and repair of damaged DNA. This is DNA ligase from Rickettsia bellii (strain RML369-C).